We begin with the raw amino-acid sequence, 6269 residues long: Nonribosomal peptide synthetase 1 (6269 aa).

The tract at residues 249–781 (ENDWSRVCSF…VSGKLDRKSI (533 aa)) is adenylation 1. A Carrier 1 domain is found at 803 to 879 (RAANSTEDQL…ELATRVKGVT (77 aa)). O-(pantetheine 4'-phosphoryl)serine is present on Ser840. The interval 894–1342 (LSPIQKLHFM…TLSDFPMLSL (449 aa)) is epimerase 1. The segment at 1373 to 1775 (SRMQQGILLS…FLQSLENIIH (403 aa)) is condensation 1. The interval 1725–2333 (HDPAEFPVYV…TGLLDRWFLR (609 aa)) is adenylation 2. The tract at residues 2364–2386 (KPSPSQLLPSSTSATHRSSGTST) is disordered. Over residues 2367–2376 (PSQLLPSSTS) the composition is skewed to low complexity. Residues 2377 to 2386 (ATHRSSGTST) show a composition bias toward polar residues. The segment at 2597–2670 (WRKYLADVES…TGSEEVCYGY (74 aa)) is condensation 2. An adenylation 3 region spans residues 2845–3368 (RCAHEIIEQQ…SGKLDRKKLR (524 aa)). Positions 3392 to 3468 (ASDEGVEGTL…NMAKRCGMLQ (77 aa)) constitute a Carrier 2 domain. Ser3429 carries the O-(pantetheine 4'-phosphoryl)serine modification. Residues 3512–3898 (CSPVQEGLLT…GQFSFVLEQL (387 aa)) form a condensation 3 region. The segment at 3919–4454 (DSKEVALWNK…VSGKLDRKKI (536 aa)) is adenylation 4. Positions 4487–4563 (EDKSTAAKIL…ELIQAAEVET (77 aa)) constitute a Carrier 3 domain. An O-(pantetheine 4'-phosphoryl)serine modification is found at Ser4524. Residues 4578–5024 (LSPIQNLYFK…DFPLLPITYD (447 aa)) form an epimerase 2 region. The interval 5052–5466 (SSVQEGILLS…PSQLVSELDL (415 aa)) is condensation 4. The Carrier 4 domain maps to 5552–5628 (SKLMEPEKRL…DMLAAISASN (77 aa)). The residue at position 5589 (Ser5589) is an O-(pantetheine 4'-phosphoryl)serine. The tract at residues 5628–5658 (NSSSALEPDSPADSNNEKPAEPPRLVELERN) is disordered. Over residues 5642–5657 (NNEKPAEPPRLVELER) the composition is skewed to basic and acidic residues. The interval 5720-6067 (FFFDGRGSLD…SSSDGKLGVS (348 aa)) is condensation 5. The region spanning 6139-6220 (SDILVHSDVV…GQMAVLTLHN (82 aa)) is the Carrier 5 domain.

This sequence belongs to the NRP synthetase family. In terms of processing, the thiolation domains are 4'-phosphopantetheinylated.

Its function is as follows. Nonribosomal peptide synthesis (NRPS) is a key mechanism responsible for the biosynthesis of bioactive metabolites which are potentially contributing to organismal virulence. Contributes to improved fungal tolerance against oxidative stress, during the infection process. This chain is Nonribosomal peptide synthetase 1 (NRPS1), found in Aspergillus fumigatus (strain ATCC MYA-4609 / CBS 101355 / FGSC A1100 / Af293) (Neosartorya fumigata).